Consider the following 165-residue polypeptide: Neurotrophin-3 (165 aa).

Residues 1–3 form the signal peptide; it reads IQS. Positions 4–119 are excised as a propeptide; it reads TSMDQGSLSE…VLNRTSRRKR (116 aa). The disordered stretch occupies residues 32–61; it reads KVPKQAARTKDGTQTTAKKTEAEPEATANK. A glycan (N-linked (GlcNAc...) asparagine) is linked at Asn-112.

The protein belongs to the NGF-beta family.

The protein localises to the secreted. Its function is as follows. Seems to promote the survival of visceral and proprioceptive sensory neurons. The protein is Neurotrophin-3 (NTF3) of Xenopeltis unicolor (Sunbeam snake).